Reading from the N-terminus, the 148-residue chain is Cytochrome c-type biogenesis protein CcmE (148 aa).

The Cytoplasmic portion of the chain corresponds to 1–7 (MKARNKR). Residues 8-28 (LMLVGGGIALLVAAAALVLSA) form a helical; Signal-anchor for type II membrane protein membrane-spanning segment. Residues 29–148 (FQQNLVFFHT…AHKTATTVQQ (120 aa)) lie on the Periplasmic side of the membrane. The heme site is built by histidine 123 and tyrosine 127.

Belongs to the CcmE/CycJ family.

The protein localises to the cell inner membrane. In terms of biological role, heme chaperone required for the biogenesis of c-type cytochromes. Transiently binds heme delivered by CcmC and transfers the heme to apo-cytochromes in a process facilitated by CcmF and CcmH. The sequence is that of Cytochrome c-type biogenesis protein CcmE from Azoarcus sp. (strain BH72).